A 629-amino-acid chain; its full sequence is Chaperone protein HtpG (629 aa).

The interval 1–343 (MQKQTLSFQA…SSDLPLNVSR (343 aa)) is a; substrate-binding. The b stretch occupies residues 344–558 (ELLQESRAVK…DGDMSTQLAR (215 aa)). Positions 559-629 (MLKQAGQTVP…YVRRVNALLV (71 aa)) are c.

It belongs to the heat shock protein 90 family. In terms of assembly, homodimer.

It is found in the cytoplasm. Functionally, molecular chaperone. Has ATPase activity. In Polaromonas naphthalenivorans (strain CJ2), this protein is Chaperone protein HtpG.